The chain runs to 234 residues: UstYa family oxidase phomYd' (234 aa).

The tract at residues 1 to 26 (MEKFFSPSRHNYADLSPTDVPASEES) is disordered. A helical transmembrane segment spans residues 47–69 (VLVNRLLAASTVALVMVSLWLGW). The short motif at 151 to 155 (HWDHC) is the HXXHC 1 element. A glycan (N-linked (GlcNAc...) asparagine) is linked at Asn208.

The protein belongs to the ustYa family.

The protein localises to the membrane. It participates in mycotoxin biosynthesis. In terms of biological role, ustYa family oxidase; part of the gene cluster that mediates the biosynthesis of the phomopsins, a group of hexapeptide mycotoxins which infects lupins and causes lupinosis disease in livestock. Within the pathway, phomYd' catalyzes the desaturation of the Asp moiety into 2,3-dehydroaspartic acid (dAsp). The pathway starts with the processing of the precursor phomA' by several endopeptidases including kexin proteases as well as the cluster-specific S41 family peptidase phomP1 and the oligopeptidase phomG' to produce 10 identical copies of the hexapeptide Tyr-Val-Ile-Pro-Ile-Asp. After being excised from the precursor peptide, the core peptides are cyclized and modified post-translationally by enzymes encoded within the gene cluster. The timing and order of proteolysis of the phomA' precursor and PTMs are still unknown. Two tyrosinase-like enzymes, phomQ1' and phomQ2, catalyze the chlorination and hydroxylation of Tyr, respectively. PhomYb, is proposed to be involved in the construction of the macrocyclic structure. The other 4 ustYa family proteins may be involved in PTMs that generate the unique structure of phomopsin A. PhomYa' is required for the hydroxylation of C-beta of Tyr. PhomYc', phomYd', and phomYe are responsible for the biosynthesis of 2,3-dehydroisoleucine (dIle), 2,3-dehydroaspartic acid (dAsp), and 3,4-dehydroproline (dPro), respectively. While dIle formation by phomYc' is indispensable for the installation of dAsp by phomYd', the order of the other PTMs have not been elucidated yet. Most of the biosynthetic enzymes likely have broad substrate specificity, and thus, there might be a metabolic grid from a precursor to phomopsin A. The enzyme(s) responsible for the biosynthesis of 3,4-dehydrovaline (dVal) have also not been identified yet. Finally, phomM' acts as an S-adenosylmethionine-dependent alpha-N-methyltransferase that catalyzes two successive N-methylation reactions, converting N-desmethyl-phomopsin A to phomopsin A and phomopsin A further to an N,N-dimethylated congener called phomopsin E. The protein is UstYa family oxidase phomYd' of Diaporthe leptostromiformis (Lupinosis disease fungus).